We begin with the raw amino-acid sequence, 801 residues long: Cation/H(+) antiporter 28 (801 aa).

12 helical membrane-spanning segments follow: residues Ala-24–Met-44, Ser-77–Leu-97, Phe-113–Leu-133, Pro-140–Thr-160, Ala-179–Phe-199, Leu-216–Phe-236, Gly-252–Pro-272, Ser-275–Asn-292, Ile-304–Ile-324, Leu-343–Gly-363, Ser-371–Ile-391, and Leu-403–Ile-423.

The protein belongs to the monovalent cation:proton antiporter 2 (CPA2) transporter (TC 2.A.37) family. CHX (TC 2.A.37.4) subfamily. As to expression, specifically expressed in pollen.

It localises to the membrane. Functionally, may operate as a cation/H(+) antiporter. This Arabidopsis thaliana (Mouse-ear cress) protein is Cation/H(+) antiporter 28 (CHX28).